Reading from the N-terminus, the 212-residue chain is ATP synthase F(0) complex subunit a (212 aa).

6 helical membrane-spanning segments follow: residues 3 to 23 (MMGI…MFTS), 58 to 78 (WAAM…LGLL), 87 to 107 (QLSM…LTGL), 128 to 148 (IPLL…ALGV), 154 to 174 (LTAG…LMPT), and 179 to 199 (ALST…VAMI).

Belongs to the ATPase A chain family. Component of the ATP synthase complex composed at least of ATP5F1A/subunit alpha, ATP5F1B/subunit beta, ATP5MC1/subunit c (homooctomer), MT-ATP6/subunit a, MT-ATP8/subunit 8, ATP5ME/subunit e, ATP5MF/subunit f, ATP5MG/subunit g, ATP5MK/subunit k, ATP5MJ/subunit j, ATP5F1C/subunit gamma, ATP5F1D/subunit delta, ATP5F1E/subunit epsilon, ATP5PF/subunit F6, ATP5PB/subunit b, ATP5PD/subunit d, ATP5PO/subunit OSCP. ATP synthase complex consists of a soluble F(1) head domain (subunits alpha(3) and beta(3)) - the catalytic core - and a membrane F(0) domain - the membrane proton channel (subunits c, a, 8, e, f, g, k and j). These two domains are linked by a central stalk (subunits gamma, delta, and epsilon) rotating inside the F1 region and a stationary peripheral stalk (subunits F6, b, d, and OSCP). Interacts with DNAJC30; interaction is direct.

It is found in the mitochondrion inner membrane. It catalyses the reaction H(+)(in) = H(+)(out). Subunit a, of the mitochondrial membrane ATP synthase complex (F(1)F(0) ATP synthase or Complex V) that produces ATP from ADP in the presence of a proton gradient across the membrane which is generated by electron transport complexes of the respiratory chain. ATP synthase complex consist of a soluble F(1) head domain - the catalytic core - and a membrane F(1) domain - the membrane proton channel. These two domains are linked by a central stalk rotating inside the F(1) region and a stationary peripheral stalk. During catalysis, ATP synthesis in the catalytic domain of F(1) is coupled via a rotary mechanism of the central stalk subunits to proton translocation. With the subunit c (ATP5MC1), forms the proton-conducting channel in the F(0) domain, that contains two crucial half-channels (inlet and outlet) that facilitate proton movement from the mitochondrial intermembrane space (IMS) into the matrix. Protons are taken up via the inlet half-channel and released through the outlet half-channel, following a Grotthuss mechanism. In Tropidurus montanus (Lizard), this protein is ATP synthase F(0) complex subunit a.